The chain runs to 223 residues: Ribonuclease T (223 aa).

One can recognise an Exonuclease domain in the interval 20–195; that stretch reads VVIDVETAGF…YDTERTAELF (176 aa). Mg(2+) is bound by residues aspartate 23, glutamate 25, histidine 182, and aspartate 187. Catalysis depends on histidine 182, which acts as the Proton donor/acceptor.

Belongs to the RNase T family. Homodimer. Mg(2+) is required as a cofactor.

Its function is as follows. Trims short 3' overhangs of a variety of RNA species, leaving a one or two nucleotide 3' overhang. Responsible for the end-turnover of tRNA: specifically removes the terminal AMP residue from uncharged tRNA (tRNA-C-C-A). Also appears to be involved in tRNA biosynthesis. The polypeptide is Ribonuclease T (Photobacterium profundum (strain SS9)).